The following is a 278-amino-acid chain: 4-deoxy-L-threo-5-hexosulose-uronate ketol-isomerase (278 aa).

Residues histidine 196, histidine 198, glutamate 203, and histidine 245 each contribute to the Zn(2+) site.

Belongs to the KduI family. In terms of assembly, homohexamer. Zn(2+) is required as a cofactor.

It carries out the reaction 5-dehydro-4-deoxy-D-glucuronate = 3-deoxy-D-glycero-2,5-hexodiulosonate. Its pathway is glycan metabolism; pectin degradation; 2-dehydro-3-deoxy-D-gluconate from pectin: step 4/5. In terms of biological role, catalyzes the isomerization of 5-dehydro-4-deoxy-D-glucuronate to 3-deoxy-D-glycero-2,5-hexodiulosonate. In Escherichia coli (strain UTI89 / UPEC), this protein is 4-deoxy-L-threo-5-hexosulose-uronate ketol-isomerase.